The following is a 190-amino-acid chain: Segregation and condensation protein B (190 aa).

This sequence belongs to the ScpB family. Homodimer. Homodimerization may be required to stabilize the binding of ScpA to the Smc head domains. Component of a cohesin-like complex composed of ScpA, ScpB and the Smc homodimer, in which ScpA and ScpB bind to the head domain of Smc. The presence of the three proteins is required for the association of the complex with DNA.

The protein localises to the cytoplasm. Participates in chromosomal partition during cell division. May act via the formation of a condensin-like complex containing Smc and ScpA that pull DNA away from mid-cell into both cell halves. This is Segregation and condensation protein B from Bacillus cereus (strain G9842).